Reading from the N-terminus, the 1016-residue chain is DNA polymerase I (1016 aa).

The region spanning 1 to 308 (MPNSIWTSSD…MEFTTLTRRV (308 aa)) is the 5'-3' exonuclease domain. Residues 334–361 (GPDLDAAEPEPVAGGIPEVSGESVPMPP) are disordered. Residues 394–630 (SAYVTIRDLV…MEARGITVDR (237 aa)) form the 3'-5' exonuclease domain. A polymerase region spans residues 768 to 1016 (GRKIRTAFIS…RAATNWDEAH (249 aa)).

Belongs to the DNA polymerase type-A family. Single-chain monomer with multiple functions.

It carries out the reaction DNA(n) + a 2'-deoxyribonucleoside 5'-triphosphate = DNA(n+1) + diphosphate. In addition to polymerase activity, this DNA polymerase exhibits 3'-5' and 5'-3' exonuclease activity. This Rhizobium leguminosarum protein is DNA polymerase I (polA).